The following is a 239-amino-acid chain: Octanoyltransferase (239 aa).

The region spanning 48–236 (EGGDELVWLV…AFETVFGETT (189 aa)) is the BPL/LPL catalytic domain. Residues 87 to 94 (RGGEYTYH), 167 to 169 (ALG), and 180 to 182 (GLS) each bind substrate. The Acyl-thioester intermediate role is filled by Cys-198.

The protein belongs to the LipB family.

The protein localises to the cytoplasm. It carries out the reaction octanoyl-[ACP] + L-lysyl-[protein] = N(6)-octanoyl-L-lysyl-[protein] + holo-[ACP] + H(+). Its pathway is protein modification; protein lipoylation via endogenous pathway; protein N(6)-(lipoyl)lysine from octanoyl-[acyl-carrier-protein]: step 1/2. In terms of biological role, catalyzes the transfer of endogenously produced octanoic acid from octanoyl-acyl-carrier-protein onto the lipoyl domains of lipoate-dependent enzymes. Lipoyl-ACP can also act as a substrate although octanoyl-ACP is likely to be the physiological substrate. The polypeptide is Octanoyltransferase (Rhizobium etli (strain ATCC 51251 / DSM 11541 / JCM 21823 / NBRC 15573 / CFN 42)).